Reading from the N-terminus, the 225-residue chain is MPVKLAQALANPLFPALDSALRSGRHIGLDELDNHAFLMDFQEYLEEFYARYNVELIRAPEGFFYLRPRSTTLIPRSVLSELDMMVGKILCYLYLSPERLANEGIFTQQELYDELLTLADEAKLLKLVNNRSTGSDVDRQKLQEKVRSSLNRLRRLGMVWFMGHDSSKFRITESVFRFGADVRAGDDPREAQRRLIRDGEAMPIENHLQLNDETEESQPDSGEEE.

The disordered stretch occupies residues 197-225 (RDGEAMPIENHLQLNDETEESQPDSGEEE). A compositionally biased stretch (acidic residues) spans 212-225 (DETEESQPDSGEEE).

Belongs to the MukE family. Interacts, and probably forms a ternary complex, with MukF and MukB. The complex formation is stimulated by calcium or magnesium.

The protein localises to the cytoplasm. It is found in the nucleoid. Functionally, involved in chromosome condensation, segregation and cell cycle progression. May participate in facilitating chromosome segregation by condensation DNA from both sides of a centrally located replisome during cell division. Probably acts via its interaction with MukB and MukF. The protein is Chromosome partition protein MukE of Salmonella typhi.